Here is a 383-residue protein sequence, read N- to C-terminus: Succinate--CoA ligase [ADP-forming] subunit beta (383 aa).

The ATP-grasp domain occupies 9-241 (KEVLHKFNVS…YDEEVKEEIE (233 aa)). ATP-binding positions include Lys-46, 53 to 55 (GRG), Glu-99, Ser-102, and Glu-107. Positions 196 and 210 each coordinate Mg(2+). Substrate contacts are provided by residues Asn-261 and 318-320 (GIM).

This sequence belongs to the succinate/malate CoA ligase beta subunit family. In terms of assembly, heterotetramer of two alpha and two beta subunits. It depends on Mg(2+) as a cofactor.

The enzyme catalyses succinate + ATP + CoA = succinyl-CoA + ADP + phosphate. It carries out the reaction GTP + succinate + CoA = succinyl-CoA + GDP + phosphate. The protein operates within carbohydrate metabolism; tricarboxylic acid cycle; succinate from succinyl-CoA (ligase route): step 1/1. Functionally, succinyl-CoA synthetase functions in the citric acid cycle (TCA), coupling the hydrolysis of succinyl-CoA to the synthesis of either ATP or GTP and thus represents the only step of substrate-level phosphorylation in the TCA. The beta subunit provides nucleotide specificity of the enzyme and binds the substrate succinate, while the binding sites for coenzyme A and phosphate are found in the alpha subunit. This is Succinate--CoA ligase [ADP-forming] subunit beta from Wolbachia sp. subsp. Drosophila simulans (strain wRi).